The primary structure comprises 131 residues: D-ribose pyranase (131 aa).

The Proton donor role is filled by His-20. Substrate is bound by residues Asp-28, His-98, and 120 to 122; that span reads YAN.

The protein belongs to the RbsD / FucU family. RbsD subfamily. Homodecamer.

The protein localises to the cytoplasm. It carries out the reaction beta-D-ribopyranose = beta-D-ribofuranose. It functions in the pathway carbohydrate metabolism; D-ribose degradation; D-ribose 5-phosphate from beta-D-ribopyranose: step 1/2. Its function is as follows. Catalyzes the interconversion of beta-pyran and beta-furan forms of D-ribose. The chain is D-ribose pyranase from Clostridium perfringens (strain SM101 / Type A).